Consider the following 334-residue polypeptide: Eukaryotic translation initiation factor 3 subunit H (334 aa).

In terms of domain architecture, MPN spans 21–155 (VQIDGLVVLK…LKAYRLTPKL (135 aa)). The tract at residues 247–284 (RNVGKQQQQKHQYTQRKQQENLQRLSRGETPLPEEDVN) is disordered. Positions 251 to 262 (KQQQQKHQYTQR) are enriched in low complexity.

It belongs to the eIF-3 subunit H family. As to quaternary structure, component of the eukaryotic translation initiation factor 3 (eIF-3) complex, which is composed of 13 subunits: eif3a, eif3b, eif3c, eif3d, eif3e, eif3f, eif3g, eif3h, eif3i, eif3j, eif3k, eif3l and eif3m.

Its subcellular location is the cytoplasm. Component of the eukaryotic translation initiation factor 3 (eIF-3) complex, which is involved in protein synthesis of a specialized repertoire of mRNAs and, together with other initiation factors, stimulates binding of mRNA and methionyl-tRNAi to the 40S ribosome. The eIF-3 complex specifically targets and initiates translation of a subset of mRNAs involved in cell proliferation. This Xenopus laevis (African clawed frog) protein is Eukaryotic translation initiation factor 3 subunit H (eif3h).